The following is a 684-amino-acid chain: Macrolide export ATP-binding/permease protein MacB (684 aa).

The ABC transporter domain maps to 2–243; that stretch reads IQLYGLRKDY…RSRLANSRAE (242 aa). 38 to 45 contacts ATP; it reads GSSGSGKT. 5 consecutive transmembrane segments (helical) span residues 248 to 268, 275 to 295, 563 to 583, 615 to 635, and 644 to 664; these read PASA…VLAL, TVLT…TMEL, LVIA…IMLV, VLCV…SVLV, and AMSI…GIVF.

Belongs to the ABC transporter superfamily. Macrolide exporter (TC 3.A.1.122) family. As to quaternary structure, homodimer.

The protein resides in the cell inner membrane. In terms of biological role, non-canonical ABC transporter that contains transmembrane domains (TMD), which form a pore in the inner membrane, and an ATP-binding domain (NBD), which is responsible for energy generation. Confers resistance against macrolides. In Rhodopirellula baltica (strain DSM 10527 / NCIMB 13988 / SH1), this protein is Macrolide export ATP-binding/permease protein MacB.